Consider the following 249-residue polypeptide: UPF0309 protein GTNG_1302 (249 aa).

The SIS domain occupies 31-214 (VSKAVQNGGI…ALMAENGVEP (184 aa)).

This sequence belongs to the UPF0309 family.

This is UPF0309 protein GTNG_1302 from Geobacillus thermodenitrificans (strain NG80-2).